We begin with the raw amino-acid sequence, 307 residues long: Delta-9 acyl-lipid desaturase 2 (307 aa).

The segment covering 1–17 (MSVTSTVEENHQKNPST) has biased composition (polar residues). The tract at residues 1-21 (MSVTSTVEENHQKNPSTPAAV) is disordered. Residues 53 to 73 (LALLAPFYFTWSALWVTFLFY) traverse the membrane as a helical segment. The Fe cation site is built by H85 and H90. The Histidine box-1 signature appears at 85-90 (HRNLAH). Residues 99-119 (LEYLLAYCALLAIQGDPIDWV) form a helical membrane-spanning segment. Positions 122, 125, and 126 each coordinate Fe cation. The short motif at 122–126 (HRYHH) is the Histidine box-2 element. The next 2 helical transmembrane spans lie at 182–202 (VLFH…MSFV) and 204–224 (WGMG…NSLC). Residues H225, H254, H257, and H258 each coordinate Fe cation. The Histidine box-3 motif lies at 254-258 (HNNHH).

Belongs to the fatty acid desaturase type 1 family. Fe cation serves as cofactor. As to expression, strongly expressed in flowers, roots, leaves, seedpods, and inflorescence meristems.

It is found in the endoplasmic reticulum membrane. The catalysed reaction is a 1-hexacosanoyl-2-acyl-phosphoglycerolipid + 2 Fe(II)-[cytochrome b5] + O2 + 2 H(+) = a 1-[(17Z)-hexacos-17-enoyl]-2-acyl-phosphoglycerolipid + 2 Fe(III)-[cytochrome b5] + 2 H2O. It catalyses the reaction a 1-tetracosanoyl-2-acyl-phosphoglycerolipid + 2 Fe(II)-[cytochrome b5] + O2 + 2 H(+) = a 1-[(15Z)-tetracos-15-enoyl]-2-acyl-phosphoglycerolipid + 2 Fe(III)-[cytochrome b5] + 2 H2O. It functions in the pathway lipid metabolism; polyunsaturated fatty acid biosynthesis. In terms of biological role, involved in delta-9 desaturation of fatty acids. Plays a role in the production of very-long-chain monounsaturated fatty acids (VLCMUFAs) in seed lipids and in membrane phospholipids and sphingolipids. Acts as C-16:0 desaturase for monogalactosyl diacylglycerol (MGDG) and phosphatidylglycerol (PG). Is an essential component for cold adaptation. Is essential to adjust the acyl composition of organelle membrane lipid composition in response to cold stress. This chain is Delta-9 acyl-lipid desaturase 2, found in Arabidopsis thaliana (Mouse-ear cress).